A 418-amino-acid polypeptide reads, in one-letter code: MAPSIDVIPTAASTAAGMISDMEAAFKSAVKLKQIPGAVVMARSMNGDIDYTRCFGARTVERDECQRLPPMEIDTPLRLASATKLLTTIMALQCMEQGLVDLDENVNRLLPDLSDMQVLTGFDAAGNAIMRDREGIIKLRHLLTHTSGLSYAFLHPLLQEYMAKGYLKTAEKFGIQSRLAPPAINDPGVEWIYGANLDWAGKLIERATGVDLEEFMQKNICEPLGITDMTFKLQQRPDMLARRSDQTRRNENGSLRYDDSVYFRHDGEECFGGQGVFCGPESYMKVLNSLMKHDGLLLKKDTIELMFQPALDAELEKKMNDHMDTTPHINYGAALPPVMRRNFGLGGIIAMGDLDGHNWRREGSLTFGGGPNIVWQIDPTVGLCTLVVFQLEPWNDPICKDLTRKFEKAMYSQVKCRN.

Position 78 (Arg-78) interacts with monacolin J. Catalysis depends on Ser-81, which acts as the Acyl-ester intermediate. Residues Arg-178, Tyr-193, and Tyr-262 each contribute to the monacolin J site. Residue Gly-370 coordinates 2-methylbutanoate.

This sequence belongs to the class-A beta-lactamase family.

The enzyme catalyses ML-236A carboxylate + (S)-2-methylbutanoyl-[2-methylbutanoate polyketide synthase] = mevinic carboxylate + holo-[2-methylbutanoate polyketide synthase]. The protein operates within polyketide biosynthesis. Functionally, compactin diketide synthase; part of the gene cluster that mediates the biosynthesis of compactin, also known as mevastatin or ML-236B, and which acts as a potent competitive inhibitor of HMG-CoA reductase. Compactin biosynthesis is performed in two stages. The first stage is catalyzed by the nonaketide synthase mlcA, which belongs to type I polyketide synthases and catalyzes the iterative nine-step formation of the polyketide. This PKS stage is completed by the action of dehydrogenase mlcG, which catalyzes the NADPH-dependent reduction of the unsaturated tetra-, penta- and heptaketide intermediates that arise during the mlcA-mediated biosynthesis of the nonaketide chain and leads to dihydro-ML-236C carboxylate. Covalently bound dihydro-ML-236C carboxylate is released from mlcA by the mlcF esterase. Conversion of dihydro-ML-236C carboxylate into ML-236A carboxylate is subsequently performed with the participation of molecular oxygen and P450 monoogygenase mlcC. Finally, mlcH performs the conversion of ML-236A carboxylate to ML-236B/compactin carboxylate through the addition of the side-chain diketide moiety produced by the diketide synthase mlcB. This chain is ML-236A carboxylate methylbutanoyltransferase mlcH, found in Penicillium citrinum.